A 376-amino-acid chain; its full sequence is Alcohol dehydrogenase class-3 (376 aa).

The residue at position 1 (S1) is an N-acetylserine. Zn(2+) contacts are provided by C47, H69, C99, C102, C105, C113, and C176.

It belongs to the zinc-containing alcohol dehydrogenase family. Class-III subfamily. Homodimer. Zn(2+) is required as a cofactor. Liver and gut.

It localises to the cytoplasm. It carries out the reaction a primary alcohol + NAD(+) = an aldehyde + NADH + H(+). The enzyme catalyses a secondary alcohol + NAD(+) = a ketone + NADH + H(+). It catalyses the reaction S-(hydroxymethyl)glutathione + NADP(+) = S-formylglutathione + NADPH + H(+). The catalysed reaction is S-(hydroxymethyl)glutathione + NAD(+) = S-formylglutathione + NADH + H(+). It carries out the reaction S-nitrosoglutathione + NADH + H(+) = S-(hydroxysulfenamide)glutathione + NAD(+). Its function is as follows. Class-III ADH is remarkably ineffective in oxidizing ethanol, but it readily catalyzes the oxidation of long-chain primary alcohols and the oxidation of S-(hydroxymethyl) glutathione. Also acts as a S-nitroso-glutathione reductase by catalyzing the NADH-dependent reduction of S-nitrosoglutathione, thereby regulating protein S-nitrosylation. This Myxine glutinosa (Atlantic hagfish) protein is Alcohol dehydrogenase class-3.